Reading from the N-terminus, the 50-residue chain is Ampulexin 2 (50 aa).

A signal peptide spans 1–26 (MKAIMVLFYVMTLTIIGSFSMVSGSP).

As to quaternary structure, dimer; disulfide-linked. As to expression, expressed in venom sac and, to a lesser extent, in venom gland. Not expressed in brain.

Its subcellular location is the secreted. In terms of biological role, amphipathic peptide which probably adopts an alpha-helical structure. Has no antimicrobial activity against E.coli DH5alpha or B.thuringiensis. Is not cytotoxic in vitro. In Ampulex compressa (Emerald cockroach wasp), this protein is Ampulexin 2.